Consider the following 850-residue polypeptide: Polyhomeotic-like protein 2 (850 aa).

Disordered stretches follow at residues 1–79, 233–314, 335–386, 402–436, and 528–553; these read MENE…QYLQ, QQTP…RAVP, LPQP…DHAL, THVHKPGNSQQCHLPTLDTGSQNGHPEGGSHPPQR, and MTSGNGNSASSIAGTAPQNGENKPPQ. Positions 15–32 are enriched in low complexity; the sequence is SVTTNTSGTNSSSGCISS. Positions 33-56 are interaction with BMI1; that stretch reads SGGGGGSGGRPTAPQISVYSGIPD. The segment covering 343–352 has biased composition (low complexity); sequence PQPQFVAQQQ. Composition is skewed to polar residues over residues 368-380 and 402-425; these read LASVSPSLALQSS and THVHKPGNSQQCHLPTLDTGSQNG. The span at 529-543 shows a compositional bias: low complexity; the sequence is TSGNGNSASSIAGTA. The HD1 motif lies at 550–579; it reads KPPQAIVKPQILTHVIEGFVIQEGAEPFPV. Residues Lys-590 and Lys-592 each participate in a glycyl lysine isopeptide (Lys-Gly) (interchain with G-Cter in SUMO2) cross-link. The disordered stretch occupies residues 597-624; sequence FLPEKPPQQDHTTTTDSEMEEPYLQESK. Thr-611 carries the post-translational modification Phosphothreonine. Residue Ser-613 is modified to Phosphoserine. A Glycyl lysine isopeptide (Lys-Gly) (interchain with G-Cter in SUMO2) cross-link involves residue Lys-624. The FCS-type zinc-finger motif lies at 625–659; it reads EEGTPLKLKCELCGRVDFAYKFKRSKRFCSMACAK. Zn(2+) is bound by residues Cys-634, Cys-637, Cys-653, and Cys-657. Disordered stretches follow at residues 676–712 and 725–764; these read RSKLQKAGTTTHNRRRASKASLPTLTKDTKKQPSGTV and SQEDSSRCSDNSSYEEPLSPISASSSTSRRRQGQRDLDLP. Lys-694 is covalently cross-linked (Glycyl lysine isopeptide (Lys-Gly) (interchain with G-Cter in SUMO2)). A compositionally biased stretch (polar residues) spans 696-712; the sequence is SLPTLTKDTKKQPSGTV. Ser-743 carries the post-translational modification Phosphoserine. The region spanning 786–850 is the SAM domain; sequence WNVEDVYEFI…YARISMLKDS (65 aa). A Glycyl lysine isopeptide (Lys-Gly) (interchain with G-Cter in SUMO2) cross-link involves residue Lys-839.

Component of a PRC1-like complex. Interacts with CBX4. Interacts with BMI1, PCGF2, PHC1 and RNF2. Interacts with CHTOP. Interacts with the N-terminal region of the SP1 transcription factor and with MAPKAPK2. Interacts with SAMD7. Interacts with SAMD11. In terms of tissue distribution, isoform 2 is ubiquitously expressed in embryos and adult tissues at much higher level than isoform 1.

It is found in the nucleus. In terms of biological role, component of a Polycomb group (PcG) multiprotein PRC1-like complex, a complex class required to maintain the transcriptionally repressive state of many genes, including Hox genes, throughout development. PcG PRC1 complex acts via chromatin remodeling and modification of histones; it mediates monoubiquitination of histone H2A 'Lys-119', rendering chromatin heritably changed in its expressibility. This Mus musculus (Mouse) protein is Polyhomeotic-like protein 2 (Phc2).